The primary structure comprises 329 residues: Sex comb on midleg-like protein 1 (329 aa).

The disordered stretch occupies residues 125–194 (NEVHESFSYP…SDFSEHNYQP (70 aa)). S138 is modified (phosphoserine). The span at 159-168 (FRMEEYQRAE) shows a compositional bias: basic and acidic residues. Position 238 is a phosphoserine (S238). Positions 258 to 325 (WSVEAVVLFL…YYIDRLKQGK (68 aa)) constitute an SAM domain.

This sequence belongs to the SCM family. Highly expressed in testis and pancreas. Preferentially expressed in the germ stem cells of testis.

It is found in the nucleus. In terms of biological role, putative Polycomb group (PcG) protein. PcG proteins act by forming multiprotein complexes, which are required to maintain the transcriptionally repressive state of homeotic genes throughout development. May be involved in spermatogenesis during sexual maturation. This is Sex comb on midleg-like protein 1 (SCML1) from Macaca mulatta (Rhesus macaque).